Reading from the N-terminus, the 154-residue chain is MSVTLDLQLASASTDGLPSEAQLQGWLDGTILGFQQEAEVTVRIVDEAESNELNLTYRGKDKPTNVLSFPFEAPPGLELPLLGDLVICRQVVEREAAEQGKPLMAHWAHMVVHGSLHLLGYDHIEDDEAEEMETLERDIMQELGFADPYLNDEE.

The Zn(2+) site is built by histidine 113, histidine 117, and histidine 123.

The protein belongs to the endoribonuclease YbeY family. Zn(2+) serves as cofactor.

The protein localises to the cytoplasm. Its function is as follows. Single strand-specific metallo-endoribonuclease involved in late-stage 70S ribosome quality control and in maturation of the 3' terminus of the 16S rRNA. This is Endoribonuclease YbeY from Aeromonas hydrophila subsp. hydrophila (strain ATCC 7966 / DSM 30187 / BCRC 13018 / CCUG 14551 / JCM 1027 / KCTC 2358 / NCIMB 9240 / NCTC 8049).